Consider the following 1586-residue polypeptide: COP1-interactive protein 1 (1586 aa).

Positions 10-84 constitute an NAB domain; sequence LKSFFEPHFD…RQYDDLTGEI (75 aa). A disordered region spans residues 88–119; sequence VNGKGESSSSSSSDSDSDHSSKRKVKRNGNGK. 4 coiled-coil regions span residues 128–411, 437–1196, 1225–1336, and 1372–1406; these read TGAL…LKES, ASEL…LKEE, LETL…TEAT, and MESL…SNQK. LRR repeat units follow at residues 173–187, 188–210, 216–239, 261–285, and 287–309; these read SEEI…TEKL, EDEK…VAGK, NQKL…GIKR, TSNL…MNSA, and EENK…GQTT. Positions 249-262 are enriched in basic and acidic residues; sequence DWKTTSDQLKDETS. Residues 249–286 form a disordered region; that stretch reads DWKTTSDQLKDETSNLKQQLEASEQRVSELTSGMNSAE. The interval 325-353 is disordered; sequence KEKESEHSSLVELHKTHERESSSQVKELE. 20 LRR repeats span residues 384–410, 437–461, 473–498, 560–586, 613–637, 649–674, 768–792, 824–850, 856–880, 902–929, 944–968, 990–1014, 1077–1101, 1120–1144, 1195–1220, 1247–1272, 1372–1396, 1398–1417, 1426–1448, and 1450–1474; these read IAEL…QLKE, ASEL…LKAA, VETM…KLKD, VSEL…LKDA, LEIM…ELKD, LSEL…LNAA, LAES…AHKR, VKEL…LNSS, ESTI…LFSL, LRGL…LKAA, QIMV…ESKL, ISEL…LEDN, RAEL…SEEA, EEII…KIKG, VQMH…NLKN, MESL…ISNI, VKLR…LTEK, AKHL…TYRG, and IKEI…LTEK. The disordered stretch occupies residues 430–456; that stretch reads QRDSSTRASELEAQLESSKQQVSDLSA. Polar residues predominate over residues 444-455; the sequence is LESSKQQVSDLS. Residues 965-985 are disordered; sequence LKAAEEESRTMSTKISETSDE. Positions 1496–1530 form a coiled coil; that stretch reads VIERNHEKEKMNKEIEKKDEEIKKLGGKVREDEKE.

As to quaternary structure, interacts with COP1 coiled-coil region. In terms of tissue distribution, mainly expressed in photosynthetic and vascular tissues. Accumulates in both dark-grown and light-grown seedlings roots and shoots, leaves and flowers (at protein level).

Its subcellular location is the cell membrane. It is found in the cytoplasm. The protein resides in the cytoskeleton. Functionally, positive regulator of abscisic acid (ABA)-mediated signaling pathways involved in abiotic stress responses (e.g. osmotic stress) and leading to various plant adaptation (e.g. stomata closure). This chain is COP1-interactive protein 1, found in Arabidopsis thaliana (Mouse-ear cress).